The following is a 251-amino-acid chain: Pyridoxine 5'-phosphate synthase (251 aa).

Asparagine 7 contacts 3-amino-2-oxopropyl phosphate. Position 9 to 10 (9 to 10 (DH)) interacts with 1-deoxy-D-xylulose 5-phosphate. Arginine 18 serves as a coordination point for 3-amino-2-oxopropyl phosphate. Histidine 43 functions as the Proton acceptor in the catalytic mechanism. Positions 45 and 50 each coordinate 1-deoxy-D-xylulose 5-phosphate. The Proton acceptor role is filled by glutamate 73. Threonine 103 serves as a coordination point for 1-deoxy-D-xylulose 5-phosphate. Histidine 197 (proton donor) is an active-site residue. 3-amino-2-oxopropyl phosphate contacts are provided by residues glycine 198 and 219–220 (GH).

This sequence belongs to the PNP synthase family. In terms of assembly, homooctamer; tetramer of dimers.

It is found in the cytoplasm. It catalyses the reaction 3-amino-2-oxopropyl phosphate + 1-deoxy-D-xylulose 5-phosphate = pyridoxine 5'-phosphate + phosphate + 2 H2O + H(+). It participates in cofactor biosynthesis; pyridoxine 5'-phosphate biosynthesis; pyridoxine 5'-phosphate from D-erythrose 4-phosphate: step 5/5. Functionally, catalyzes the complicated ring closure reaction between the two acyclic compounds 1-deoxy-D-xylulose-5-phosphate (DXP) and 3-amino-2-oxopropyl phosphate (1-amino-acetone-3-phosphate or AAP) to form pyridoxine 5'-phosphate (PNP) and inorganic phosphate. The protein is Pyridoxine 5'-phosphate synthase of Caulobacter sp. (strain K31).